A 331-amino-acid polypeptide reads, in one-letter code: Ferredoxin--NADP reductase 2 (331 aa).

FAD contacts are provided by Glu-37, Gln-45, Tyr-50, Val-90, Phe-124, Asp-285, and Thr-326.

Belongs to the ferredoxin--NADP reductase type 2 family. In terms of assembly, homodimer. It depends on FAD as a cofactor.

The catalysed reaction is 2 reduced [2Fe-2S]-[ferredoxin] + NADP(+) + H(+) = 2 oxidized [2Fe-2S]-[ferredoxin] + NADPH. This chain is Ferredoxin--NADP reductase 2, found in Bacillus velezensis (strain DSM 23117 / BGSC 10A6 / LMG 26770 / FZB42) (Bacillus amyloliquefaciens subsp. plantarum).